The primary structure comprises 156 residues: uncharacterized protein (156 aa).

An N-terminal signal peptide occupies residues M1–A18. The Thioredoxin domain occupies Q19 to K156. C54 and C57 are oxidised to a cystine.

This sequence belongs to the thioredoxin family.

This is an uncharacterized protein from Haemophilus influenzae (strain ATCC 51907 / DSM 11121 / KW20 / Rd).